The chain runs to 177 residues: UPF0200 protein STK_09500 (177 aa).

ATP is bound at residue glycine 11–glycine 18.

Belongs to the UPF0200 family.

This Sulfurisphaera tokodaii (strain DSM 16993 / JCM 10545 / NBRC 100140 / 7) (Sulfolobus tokodaii) protein is UPF0200 protein STK_09500.